Here is a 434-residue protein sequence, read N- to C-terminus: MSADGAEADGSTQVTVEEPVQQPSVVDRVASMPLISSTCDMVSAAYASTKESYPHVKTVCDAAEKGVRTLTAAAVSGAQPILSKLEPQIASASEYAHRGLDKLEENLPILQQPTERVLADTKELVSSKVSGAQEMVSSAKDTVATQLSEAVDATRGAVQSGVDKTKSVVTGGVQSVMGSRLGQMVLSGVDTVLGKSGEWADNHLPLTDAELARIATSLDGFDVASVQQQRQEQSYFVRLGSLSERLRQHAYEHSLGKLRATKQRAQEALLQLSQALSLMETVKEGVDQKLVEGQEKLHQMWLSWNQKQLQGPEKEPPKPEQVESRALTMFRDIAQQLQATCTSLGSSIQGLPTNVKDQVQQARRQVEDLQATFSSIHSFQDLSSSILAQSRERVASAREALDHMVEYVAQNTPVTWLVGPFAPGITEKAPEEKK.

The disordered stretch occupies residues 1 to 22 (MSADGAEADGSTQVTVEEPVQQ). Position 2 is an N-acetylserine (Ser2). The residue at position 31 (Ser31) is a Phosphoserine. An N6-acetyllysine modification is found at Lys65. Ser91 is subject to Phosphoserine. Lys122 is covalently cross-linked (Glycyl lysine isopeptide (Lys-Gly) (interchain with G-Cter in SUMO1)). A phosphoserine mark is found at Ser130 and Ser148. Thr170 is modified (phosphothreonine). Ser175 and Ser179 each carry phosphoserine. Position 216 is a phosphothreonine (Thr216). 2 positions are modified to phosphoserine: Ser217 and Ser241. Phosphotyrosine is present on Tyr251. 2 coiled-coil regions span residues 252-280 (EHSL…SLME) and 353-377 (TNVK…SSIH).

The protein belongs to the perilipin family. In terms of assembly, homooligomer. Interacts with M6PR (via the cytoplasmic domain). Interacts with IGF2R (via the cytoplasmic domain). In terms of processing, phosphorylation at Tyr-251 by isoform 1 of CHKA (CHKalpha2) promotes dissociation from lipid droplets: dissociation is followed by recruitment of autophagosome machinery to lipid droplets and subsequent lipid droplet lipolysis.

The protein localises to the lipid droplet. Its subcellular location is the endosome membrane. It is found in the cytoplasm. Functionally, structural component of lipid droplets, which is required for the formation and maintenance of lipid storage droplets. Required for the transport of mannose 6-phosphate receptors (MPR) from endosomes to the trans-Golgi network. The chain is Perilipin-3 (PLIN3) from Pongo abelii (Sumatran orangutan).